Here is a 136-residue protein sequence, read N- to C-terminus: Peptide methionine sulfoxide reductase MsrB (136 aa).

Residues 9–136 (DAEWKALLAE…NSASLDFKKK (128 aa)) enclose the MsrB domain. Zn(2+) is bound by residues cysteine 53, cysteine 56, cysteine 102, and cysteine 105. The active-site Nucleophile is the cysteine 125.

The protein belongs to the MsrB Met sulfoxide reductase family. Zn(2+) is required as a cofactor.

It catalyses the reaction L-methionyl-[protein] + [thioredoxin]-disulfide + H2O = L-methionyl-(R)-S-oxide-[protein] + [thioredoxin]-dithiol. In Variovorax paradoxus (strain S110), this protein is Peptide methionine sulfoxide reductase MsrB.